We begin with the raw amino-acid sequence, 141 residues long: NTDQSFPGFLGSEMWNPNTDLSEDCLYLNVWIPTPKPKNATVMIWIYGGSFQTGTSSLHVYDGKFLARVERVIVVSMNYRVGALGFLALPGNPEAPGNVGLFDQQLALQWVQKNIAAFGGNPKSVTLFGESAGAASVSLHL.

Residue Asn39 is glycosylated (N-linked (GlcNAc...) asparagine). Substrate is bound at residue 49-50 (GS). Ser131 acts as the Acyl-ester intermediate in catalysis. Ser131 bears the Phosphoserine mark.

This sequence belongs to the type-B carboxylesterase/lipase family. In terms of assembly, homotetramer; disulfide-linked. Dimer of dimers. As to expression, present in most cells except erythrocytes.

Its subcellular location is the secreted. The catalysed reaction is an acylcholine + H2O = a carboxylate + choline + H(+). In terms of biological role, esterase with broad substrate specificity. Contributes to the inactivation of the neurotransmitter acetylcholine. Can degrade neurotoxic organophosphate esters. The chain is Cholinesterase (BCHE) from Ovis aries (Sheep).